A 400-amino-acid polypeptide reads, in one-letter code: NADH-quinone oxidoreductase subunit D (400 aa).

This sequence belongs to the complex I 49 kDa subunit family. As to quaternary structure, NDH-1 is composed of 14 different subunits. Subunits NuoB, C, D, E, F, and G constitute the peripheral sector of the complex.

The protein localises to the cell inner membrane. It catalyses the reaction a quinone + NADH + 5 H(+)(in) = a quinol + NAD(+) + 4 H(+)(out). Its function is as follows. NDH-1 shuttles electrons from NADH, via FMN and iron-sulfur (Fe-S) centers, to quinones in the respiratory chain. The immediate electron acceptor for the enzyme in this species is believed to be a menaquinone. Couples the redox reaction to proton translocation (for every two electrons transferred, four hydrogen ions are translocated across the cytoplasmic membrane), and thus conserves the redox energy in a proton gradient. The protein is NADH-quinone oxidoreductase subunit D of Chlorobaculum tepidum (strain ATCC 49652 / DSM 12025 / NBRC 103806 / TLS) (Chlorobium tepidum).